We begin with the raw amino-acid sequence, 992 residues long: Exportin-T (992 aa).

Belongs to the exportin family.

It is found in the nucleus. The protein resides in the cytoplasm. TRNA nucleus export receptor which facilitates tRNA translocation across the nuclear pore complex. Involved in pre-tRNA splicing, probably by affecting the interaction of pre-tRNA with splicing endonuclease. The protein is Exportin-T (LOS1) of Scheffersomyces stipitis (strain ATCC 58785 / CBS 6054 / NBRC 10063 / NRRL Y-11545) (Yeast).